We begin with the raw amino-acid sequence, 643 residues long: NAD-dependent malic enzyme, mitochondrial (643 aa).

A mitochondrion-targeting transit peptide spans 1–38; that stretch reads PRVRSFIAHQSGITSVIRRSPDIAHRMVRSLSVSSQRN. 3 residues coordinate fumarate: Gln116, Arg119, and Arg143. The active-site Proton donor is the Tyr164. Arg219 provides a ligand contact to (S)-malate. An NAD(+)-binding site is contributed by Arg219. Catalysis depends on Lys237, which acts as the Proton acceptor. Residues Glu309 and Asp310 each contribute to the a divalent metal cation site. Residues Asn313, Asp333, Ala366, Ala369, and Asn472 each coordinate NAD(+). An a divalent metal cation-binding site is contributed by Asp333. Residues Asn472 and Asn516 each coordinate (S)-malate.

It belongs to the malic enzymes family. As to quaternary structure, homotetramer. Mg(2+) is required as a cofactor. Mn(2+) serves as cofactor.

Its subcellular location is the mitochondrion matrix. It carries out the reaction (S)-malate + NAD(+) = pyruvate + CO2 + NADH. The catalysed reaction is oxaloacetate + H(+) = pyruvate + CO2. Its activity is regulated as follows. Subject to allosteric activation by fumarate. In terms of biological role, NAD-dependent mitochondrial malic enzyme that catalyzes the oxidative decarboxylation of malate to pyruvate. The polypeptide is NAD-dependent malic enzyme, mitochondrial (Ascaris suum (Pig roundworm)).